A 252-amino-acid polypeptide reads, in one-letter code: Sensory transduction protein LytR (252 aa).

The Response regulatory domain occupies 2-116 (KALIVDDEPL…RINQAVNKVD (115 aa)). At aspartate 53 the chain carries 4-aspartylphosphate. The HTH LytTR-type domain maps to 147 to 251 (LPIEVDERIH…MKTFKQQLGL (105 aa)).

Phosphorylated by LytS.

The protein resides in the cytoplasm. Member of the two-component regulatory system LytR/LytS that probably regulates genes involved in cell wall metabolism. The chain is Sensory transduction protein LytR (lytR) from Staphylococcus epidermidis (strain ATCC 12228 / FDA PCI 1200).